Consider the following 947-residue polypeptide: Beta-glucosidase (947 aa).

The active site involves aspartate 696.

It belongs to the glycosyl hydrolase 3 family.

It carries out the reaction Hydrolysis of terminal, non-reducing beta-D-glucosyl residues with release of beta-D-glucose.. Its pathway is glycan metabolism; cellulose degradation. This Ruminococcus albus protein is Beta-glucosidase.